Reading from the N-terminus, the 378-residue chain is Pseudouridine kinase (378 aa).

Residues aspartate 12, threonine 26, 37–41 (GVARN), valine 38, asparagine 137, and lysine 166 contribute to the pseudouridine site. Serine 181 and threonine 237 together coordinate Mg(2+). 6 residues coordinate ATP: threonine 237, glycine 239, glycine 242, threonine 298, leucine 306, and glycine 310. A pseudouridine-binding site is contributed by aspartate 311.

It belongs to the carbohydrate kinase PfkB family. As to quaternary structure, forms homodimers.

Its subcellular location is the peroxisome. The catalysed reaction is pseudouridine + ATP = psi-UMP + ADP + H(+). Its function is as follows. Catalyzes the phosphorylation of pseudouridine to pseudouridine 5'-phosphate (PsiMP). Catalyzes the first step in a pseudouridine degradation pathway. Acts together with the pseudouridine 5'-phosphate glycosidase PUMY in the peroxisome to prevent toxic pseudouridine monophosphate accumulation. The polypeptide is Pseudouridine kinase (Arabidopsis thaliana (Mouse-ear cress)).